Consider the following 547-residue polypeptide: Natural resistance-associated macrophage protein 1 (547 aa).

Residues Met-1–Pro-30 form a disordered region. At Met-1–Lys-54 the chain is on the cytoplasmic side. Positions Gln-8–Ser-17 are enriched in polar residues. A compositionally biased stretch (low complexity) spans Pro-21–Pro-30. The helical transmembrane segment at Leu-55–Ile-75 threads the bilayer. The Extracellular segment spans residues Glu-76–Ala-81. Residues Gly-82–Leu-102 traverse the membrane as a helical segment. Topologically, residues Cys-103–Glu-139 are cytoplasmic. The chain crosses the membrane as a helical span at residues Leu-140–Leu-160. Over Ser-161 to Arg-164 the chain is Extracellular. A helical transmembrane segment spans residues Ile-165–Asp-185. The Cytoplasmic segment spans residues Asn-186–Glu-193. The helical transmembrane segment at Ala-194–Ala-214 threads the bilayer. At Arg-215–Gln-240 the chain is on the extracellular side. The helical transmembrane segment at Ala-241 to Val-261 threads the bilayer. Topologically, residues Lys-262–Ser-286 are cytoplasmic. A helical transmembrane segment spans residues Ile-287 to Phe-307. Residues Tyr-308–Gly-346 lie on the Extracellular side of the membrane. N-linked (GlcNAc...) asparagine glycans are attached at residues Asn-321 and Asn-335. Residues Val-347–Ala-367 form a helical membrane-spanning segment. At Ala-368–Arg-394 the chain is on the cytoplasmic side. Residues Phe-395–Phe-415 form a helical membrane-spanning segment. At Arg-416–Gln-432 the chain is on the extracellular side. The helical transmembrane segment at Ser-433–Met-453 threads the bilayer. At Gln-454 to Ala-464 the chain is on the cytoplasmic side. A helical membrane pass occupies residues Ile-465–Leu-485. Over Pro-486–Ala-492 the chain is Extracellular. A helical transmembrane segment spans residues Tyr-493–Trp-513. The Cytoplasmic portion of the chain corresponds to Thr-514–Gly-547.

It belongs to the NRAMP family.

It localises to the late endosome membrane. It is found in the lysosome membrane. It carries out the reaction Zn(2+)(in) + H(+)(out) = Zn(2+)(out) + H(+)(in). The catalysed reaction is Fe(2+)(in) + H(+)(out) = Fe(2+)(out) + H(+)(in). It catalyses the reaction Mn(2+)(in) + H(+)(out) = Mn(2+)(out) + H(+)(in). Its function is as follows. Macrophage-specific antiporter that fluxes metal ions in either direction against a proton gradient. Localized to late endosomal lysosomal membranes, delivers bivalent cations from the cytosol into these acidic compartments where they may directly affect antimicrobial activity. Involved in iron metabolism and host natural resistance to infection with intracellular parasites. Pathogen resistance involves sequestration of Fe(2+) and Mn(2+), cofactors of both prokaryotic and eukaryotic catalases and superoxide dismutases, not only to protect the macrophage against its own generation of reactive oxygen species, but to deny the cations to the pathogen for synthesis of its protective enzymes. The chain is Natural resistance-associated macrophage protein 1 (SLC11A1) from Canis lupus familiaris (Dog).